Reading from the N-terminus, the 356-residue chain is Protein SEC13 homolog (356 aa).

WD repeat units lie at residues 11–50, 54–95, 101–142, 149–205, 210–253, and 259–298; these read EHED…KALA, GHQG…DWTK, NHDS…GVWD, AHTI…WVEE, AHSD…SEWT, and TFDD…QWIR. The segment at 307-356 is disordered; it reads IQSKQPSHLPHSHSQQQQALQQHQQQAPSHPGPSSDSEHSSNLSNSQLSN. Positions 308–356 are enriched in low complexity; that stretch reads QSKQPSHLPHSHSQQQQALQQHQQQAPSHPGPSSDSEHSSNLSNSQLSN.

This sequence belongs to the WD repeat SEC13 family. As to quaternary structure, probable component of the nuclear pore complex (NPC). Component of the GATOR complex consisting of mio, Nup44A/Seh1, Im11, Nplr3, Nplr2, Wdr24, Wdr59 and Sec13. Within the GATOR complex, probable component of the GATOR2 subcomplex which is likely composed of mio, Nup44A/Seh1, Wdr24, Wdr59 and Sec13. Interacts with msk. Interacts (preferentially when phosphorylated) with Mad. The GATOR2 complex associates with unmet in the absence of S-adenosyl-L-methionine; the mio-Wdr24-Nup44A subcomplex is essential and sufficient for this interaction while Wdr59 and Sec13 are dispensable. This association acts as a nutrient sensor to inhibit mTORC1 signaling in the absence of methionine. Salivary glands.

It is found in the nucleus envelope. Its subcellular location is the nucleus. The protein localises to the nucleoplasm. The protein resides in the cytoplasm. It localises to the cytoskeleton. It is found in the microtubule organizing center. Its subcellular location is the centrosome. The protein localises to the nuclear pore complex. The protein resides in the cytoplasmic vesicle. It localises to the COPII-coated vesicle membrane. It is found in the endoplasmic reticulum membrane. Its subcellular location is the lysosome membrane. Functionally, functions as a component of the nuclear pore complex (NPC) and the COPII coat. At the endoplasmic reticulum, SEC13 is involved in the biogenesis of COPII-coated vesicles. Recruited to transcriptionally active chromatin at the time of transcription initiation by RNA polymerase II. Required for proper expression of ecdysone-responsive genes such as Eip74EF and Eip75B during larval development. Required for reactivation of transcription after heat shock. Required for nuclear import of phosphorylated Mad via importin msk. Has no role in classical nuclear localization signal (cNLS)-dependent nuclear import via importin-beta. Its function is as follows. A component of the GATOR subcomplex GATOR2 which functions as an activator of the amino acid-sensing branch of the mTORC1 signaling pathway. The two GATOR subcomplexes, GATOR1 and GATOR2, regulate the mTORC1 pathway in order to mediate metabolic homeostasis, female gametogenesis and the response to amino acid limitation and complete starvation. GATOR2 activates the mTORC1 signaling pathway through the inhibition of the GATOR1 subcomplex, controlling the switch to cell proliferation and growth under nutrient replete conditions and during female oocyte development. This Drosophila melanogaster (Fruit fly) protein is Protein SEC13 homolog.